A 56-amino-acid chain; its full sequence is MPLTDPVKLQIVQQRIFLKKVCRDCGALNSVRATKCRRCHSKNLRPKKKELPAKKG.

This sequence belongs to the eukaryotic ribosomal protein eL40 family.

This chain is Large ribosomal subunit protein eL40, found in Sulfurisphaera tokodaii (strain DSM 16993 / JCM 10545 / NBRC 100140 / 7) (Sulfolobus tokodaii).